Consider the following 157-residue polypeptide: Crossover junction endodeoxyribonuclease RuvC (157 aa).

Catalysis depends on residues D7, E67, and D140. Residues D7, E67, and D140 each coordinate Mg(2+).

The protein belongs to the RuvC family. Homodimer which binds Holliday junction (HJ) DNA. The HJ becomes 2-fold symmetrical on binding to RuvC with unstacked arms; it has a different conformation from HJ DNA in complex with RuvA. In the full resolvosome a probable DNA-RuvA(4)-RuvB(12)-RuvC(2) complex forms which resolves the HJ. Mg(2+) is required as a cofactor.

The protein localises to the cytoplasm. It carries out the reaction Endonucleolytic cleavage at a junction such as a reciprocal single-stranded crossover between two homologous DNA duplexes (Holliday junction).. The RuvA-RuvB-RuvC complex processes Holliday junction (HJ) DNA during genetic recombination and DNA repair. Endonuclease that resolves HJ intermediates. Cleaves cruciform DNA by making single-stranded nicks across the HJ at symmetrical positions within the homologous arms, yielding a 5'-phosphate and a 3'-hydroxyl group; requires a central core of homology in the junction. The consensus cleavage sequence is 5'-(A/T)TT(C/G)-3'. Cleavage occurs on the 3'-side of the TT dinucleotide at the point of strand exchange. HJ branch migration catalyzed by RuvA-RuvB allows RuvC to scan DNA until it finds its consensus sequence, where it cleaves and resolves the cruciform DNA. The chain is Crossover junction endodeoxyribonuclease RuvC from Rickettsia bellii (strain OSU 85-389).